Here is a 578-residue protein sequence, read N- to C-terminus: Pentatricopeptide repeat-containing protein At4g22760 (578 aa).

PPR repeat units follow at residues 68 to 102 (DSFSWGCLVRFLSQHRKFKETVDVYIDMHNSGIPP), 103 to 137 (SSHAVTSVLRACGKMENMVDGKPIHAQALKNGLCG), 138 to 168 (CVYVQTGLVGLYSRLGYIELAKKAFDDIAEK), 169 to 203 (NTVSWNSLLHGYLESGELDEARRVFDKIPEKDAVS), 204 to 230 (WNLIISSYAKKGDMGNACSLFSAMPLK), 231 to 261 (SPASWNILIGGYVNCREMKLARTYFDAMPQK), 262 to 292 (NGVSWITMISGYTKLGDVQSAEELFRLMSKK), 293 to 327 (DKLVYDAMIACYTQNGKPKDALKLFAQMLERNSYI), 330 to 364 (DEITLSSVVSANSQLGNTSFGTWVESYITEHGIKI), 365 to 395 (DDLLSTSLIDLYMKGGDFAKAFKMFSNLNKK), 396 to 430 (DTVSYSAMIMGCGINGMATEANSLFTAMIEKKIPP), 431 to 465 (NVVTFTGLLSAYSHSGLVQEGYKCFNSMKDHNLEP), and 466 to 496 (SADHYGIMVDMLGRAGRLEEAYELIKSMPMQ). The type E motif stretch occupies residues 501–576 (VWGALLLASG…TLGCSWVEGS (76 aa)).

Belongs to the PPR family. PCMP-E subfamily.

The sequence is that of Pentatricopeptide repeat-containing protein At4g22760 (PCMP-E6) from Arabidopsis thaliana (Mouse-ear cress).